The sequence spans 282 residues: Orotidine 5'-phosphate decarboxylase (282 aa).

Lysine 95 (proton donor) is an active-site residue.

The protein belongs to the OMP decarboxylase family. Type 2 subfamily.

It carries out the reaction orotidine 5'-phosphate + H(+) = UMP + CO2. It functions in the pathway pyrimidine metabolism; UMP biosynthesis via de novo pathway; UMP from orotate: step 2/2. The protein is Orotidine 5'-phosphate decarboxylase (pyrF) of Mycobacterium leprae (strain TN).